Consider the following 336-residue polypeptide: F-box protein PP2-B1 (336 aa).

Residues 1–22 are disordered; that stretch reads MEQIHGGDSNSGGGGGGSSRND. A compositionally biased stretch (gly residues) spans 9-18; that stretch reads SNSGGGGGGS. The region spanning 29–75 is the F-box domain; the sequence is ASRFDALPEDCISKVISHTSPRDACVVASVSKSVKSAAQSDLVWEMF.

Part of a SCF (ASK-cullin-F-box) protein ligase complex. Interacts with SKP1A/ASK1 and SPK1B/ASK2.

Its subcellular location is the nucleus. It participates in protein modification; protein ubiquitination. Its function is as follows. Component of SCF(ASK-cullin-F-box) E3 ubiquitin ligase complexes, which may mediate the ubiquitination and subsequent proteasomal degradation of target proteins. The polypeptide is F-box protein PP2-B1 (PP2B1) (Arabidopsis thaliana (Mouse-ear cress)).